A 1482-amino-acid chain; its full sequence is Cystic fibrosis transmembrane conductance regulator (1482 aa).

Over 1 to 77 the chain is Cytoplasmic; sequence MQRSPLEKAS…KLINALRRCF (77 aa). The helical transmembrane segment at 78–98 threads the bilayer; sequence FWRFTFYGIILYLGEVTKAVQ. The ABC transmembrane type-1 1 domain maps to 81–365; it reads FTFYGIILYL…WAVQTWYDSL (285 aa). The Extracellular portion of the chain corresponds to 99 to 122; that stretch reads PLLLGRIIASYDPDNKVERSIAIY. A helical transmembrane segment spans residues 123 to 146; that stretch reads LAVGLCLLFVVRTLLLHPAIFGLH. Topologically, residues 147 to 195 are cytoplasmic; that stretch reads HIGMQMRIAMFSLIYKKTLKLSSRVLDKISIGQLVSLLSNNLNKFDEGL. The helical transmembrane segment at 196–216 threads the bilayer; the sequence is ALAHFVWIAPLQVTLLMGLLW. Over 217 to 222 the chain is Extracellular; sequence DLLQAS. A helical transmembrane segment spans residues 223 to 243; that stretch reads AFSGLGVLIILACFQAGFGRM. The Cytoplasmic portion of the chain corresponds to 244 to 298; it reads MMKYRDQRAGKINERLVITSEMIENIQSVKAYCWEEALEKMIENFRQSELRLTRK. A helical transmembrane segment spans residues 299–319; the sequence is AAYVRYFNSSAFFFSGFFVVF. At 320-339 the chain is on the extracellular side; the sequence is LSVLPYALIKGIILRKIFTT. A helical membrane pass occupies residues 340–358; that stretch reads ISFCIVLRMAVTRQFPWAV. Residues 359-859 are Cytoplasmic-facing; the sequence is QTWYDSLGAI…YLRYITVHKR (501 aa). Residues Trp401, Ser434, 458-465, and Gln493 each bind ATP; that span reads GSTGAGKT. The 224-residue stretch at 423–646 folds into the ABC transporter 1 domain; sequence NVDNSLFFSN…RPDFSSKLMG (224 aa). Cys524 carries S-palmitoyl cysteine lipidation. Ser549 and Ser660 each carry phosphoserine. The tract at residues 654–832 is disordered R region; it reads SAERRNSIIT…EEINEEDLKE (179 aa). Residue Ser670 is modified to Phosphoserine; by PKA. At Ser686 the chain carries Phosphoserine. Lys688 participates in a covalent cross-link: Glycyl lysine isopeptide (Lys-Gly) (interchain with G-Cter in ubiquitin). Phosphoserine occurs at positions 700 and 712. Thr717 bears the Phosphothreonine mark. Phosphoserine occurs at positions 737, 768, 796, and 814. The chain crosses the membrane as a helical span at residues 860-880; sequence LIFVLIWCFVVFLIEVAASLV. The ABC transmembrane type-1 2 domain maps to 860 to 1156; sequence LIFVLIWCFV…AVNSSIDVDS (297 aa). Topologically, residues 881–919 are extracellular; it reads LLCLLSKVSPEDKGNTTKSANDSSAVIITSTSSFYFLYI. Residues Asn895 and Asn901 are each glycosylated (N-linked (GlcNAc...) asparagine). A discontinuously helical transmembrane segment spans residues 920–940; it reads YVGVADTFLALGLFRGLPLVH. Residues 941–991 are Cytoplasmic-facing; the sequence is TLITVSKILHHKMLHSVLQAPMSTLNTLKAGGILNRFSKDIAILDDLLPLT. The helical transmembrane segment at 992-1012 threads the bilayer; that stretch reads IFDFIQLLLIVIGAVAVVSIL. At 1013–1014 the chain is on the extracellular side; the sequence is KP. A helical transmembrane segment spans residues 1015-1035; sequence YIFLATVPVIVAFVLLRAYFL. Residues 1036-1096 are Cytoplasmic-facing; sequence HTSQQLKQLE…TANWFLYLST (61 aa). A helical membrane pass occupies residues 1097–1117; sequence LRWFQMRIEMIFVIFFIAVTF. The Extracellular portion of the chain corresponds to 1118–1131; the sequence is ISILTTGEGEGTVG. A helical transmembrane segment spans residues 1132-1152; that stretch reads IILTLAMNIMSTLQWAVNSSI. Topologically, residues 1153–1482 are cytoplasmic; sequence DVDSLMRSVS…TEEEVQDTRL (330 aa). The 234-residue stretch at 1212–1445 folds into the ABC transporter 2 domain; it reads MTVKDLTAKY…KSLFRQAISP (234 aa). Residues Tyr1221 and 1246–1253 contribute to the ATP site; that span reads GRTGSGKS. Residues 1388–1482 form an interaction with GORASP2 region; sequence RTLKQAFADC…TEEEVQDTRL (95 aa). A lipid anchor (S-palmitoyl cysteine) is attached at Cys1397. Ser1446 bears the Phosphoserine mark. Positions 1450 to 1482 are disordered; that stretch reads KLFPHQNSGKHKSRSKITALKEETEEEVQDTRL. Residues 1472-1482 show a composition bias toward acidic residues; it reads ETEEEVQDTRL. The PDZ-binding signature appears at 1480 to 1482; the sequence is TRL.

Belongs to the ABC transporter superfamily. ABCC family. CFTR transporter (TC 3.A.1.202) subfamily. Monomer; does not require oligomerization for channel activity. May form oligomers in the membrane. Interacts with SLC26A3, SLC26A6 and NHERF1. Interacts with SHANK2. Interacts with MYO6. Interacts (via C-terminus) with GOPC (via PDZ domain); this promotes CFTR internalization and thereby decreases channel activity. Interacts with SLC4A7 through NHERF1. Found in a complex with MYO5B and RAB11A. Interacts with ANO1. Interacts with SLC26A8. Interacts with AHCYL1; the interaction increases CFTR activity. Interacts with CSE1L. The core-glycosylated form interacts with GORASP2 (via PDZ GRASP-type 1 domain) in respone to ER stress. Interacts with MARCHF2; the interaction leads to CFTR ubiqtuitination and degradation. Interacts with ADGRG2. Post-translationally, N-glycosylated. Phosphorylated; cAMP treatment promotes phosphorylation and activates the channel. Dephosphorylation decreases the ATPase activity (in vitro). Phosphorylation at PKA sites activates the channel. Phosphorylation at PKC sites enhances the response to phosphorylation by PKA. Phosphorylated by AMPK; this inhibits channel activity. In terms of processing, ubiquitinated, leading to its degradation in the lysosome. Deubiquitination by USP10 in early endosomes enhances its endocytic recycling to the cell membrane. Ubiquitinated by RNF185 during ER stress. Ubiquitinated by MARCHF2.

It is found in the apical cell membrane. The protein resides in the early endosome membrane. Its subcellular location is the cell membrane. The protein localises to the recycling endosome membrane. It localises to the endoplasmic reticulum membrane. It is found in the nucleus. The enzyme catalyses ATP + H2O + closed Cl(-) channel = ADP + phosphate + open Cl(-) channel.. It catalyses the reaction chloride(in) = chloride(out). The catalysed reaction is hydrogencarbonate(in) = hydrogencarbonate(out). It carries out the reaction ATP + H2O = ADP + phosphate + H(+). Functionally, epithelial ion channel that plays an important role in the regulation of epithelial ion and water transport and fluid homeostasis. Mediates the transport of chloride ions across the cell membrane. Possesses an intrinsic ATPase activity and utilizes ATP to gate its channel; the passive flow of anions through the channel is gated by cycles of ATP binding and hydrolysis by the ATP-binding domains. The ion channel is also permeable to HCO(3)(-); selectivity depends on the extracellular chloride concentration. Exerts its function also by modulating the activity of other ion channels and transporters. Contributes to the regulation of the pH and the ion content of the epithelial fluid layer. Modulates the activity of the epithelial sodium channel (ENaC) complex, in part by regulating the cell surface expression of the ENaC complex. May regulate bicarbonate secretion and salvage in epithelial cells by regulating the transporter SLC4A7. Can inhibit the chloride channel activity of ANO1. Plays a role in the chloride and bicarbonate homeostasis during sperm epididymal maturation and capacitation. In Dasypus novemcinctus (Nine-banded armadillo), this protein is Cystic fibrosis transmembrane conductance regulator.